Reading from the N-terminus, the 72-residue chain is ATP synthase subunit c (72 aa).

2 helical membrane-spanning segments follow: residues 1-21 (MSLGVIAAAIAIGLSALGAGI) and 49-69 (FIGVALVEALPIIGVVIAFIV).

This sequence belongs to the ATPase C chain family. F-type ATPases have 2 components, F(1) - the catalytic core - and F(0) - the membrane proton channel. F(1) has five subunits: alpha(3), beta(3), gamma(1), delta(1), epsilon(1). F(0) has three main subunits: a(1), b(2) and c(10-14). The alpha and beta chains form an alternating ring which encloses part of the gamma chain. F(1) is attached to F(0) by a central stalk formed by the gamma and epsilon chains, while a peripheral stalk is formed by the delta and b chains.

The protein localises to the cell membrane. In terms of biological role, f(1)F(0) ATP synthase produces ATP from ADP in the presence of a proton or sodium gradient. F-type ATPases consist of two structural domains, F(1) containing the extramembraneous catalytic core and F(0) containing the membrane proton channel, linked together by a central stalk and a peripheral stalk. During catalysis, ATP synthesis in the catalytic domain of F(1) is coupled via a rotary mechanism of the central stalk subunits to proton translocation. Key component of the F(0) channel; it plays a direct role in translocation across the membrane. A homomeric c-ring of between 10-14 subunits forms the central stalk rotor element with the F(1) delta and epsilon subunits. This chain is ATP synthase subunit c, found in Bacillus cytotoxicus (strain DSM 22905 / CIP 110041 / 391-98 / NVH 391-98).